The following is a 264-amino-acid chain: Undecaprenyl-diphosphatase (264 aa).

A run of 7 helical transmembrane segments spans residues 38-58, 75-95, 106-126, 136-156, 181-201, 217-237, and 242-262; these read RSDF…VLVF, REYV…GLVV, VSPV…VEAY, VTWT…VFPG, FVFL…FLEM, VAFL…MGYI, and FTAF…WLPS.

This sequence belongs to the UppP family.

It is found in the cell inner membrane. It catalyses the reaction di-trans,octa-cis-undecaprenyl diphosphate + H2O = di-trans,octa-cis-undecaprenyl phosphate + phosphate + H(+). Catalyzes the dephosphorylation of undecaprenyl diphosphate (UPP). Confers resistance to bacitracin. In Stenotrophomonas maltophilia (strain R551-3), this protein is Undecaprenyl-diphosphatase.